A 547-amino-acid polypeptide reads, in one-letter code: Methyl-accepting chemotaxis citrate transducer (547 aa).

Over 1–5 (MKNIK) the chain is Cytoplasmic. A helical transmembrane segment spans residues 6–29 (VITGVIATLGIFSALLLVTGILFY). Residues 30–189 (SAVSSDRLNF…ASDQNQSSFT (160 aa)) lie on the Periplasmic side of the membrane. Residues 190–213 (QMQWTLGIILLIVLIVLAFIWLGL) traverse the membrane as a helical segment. Residues 214-547 (QRVLLRPLQR…AAEQANWESF (334 aa)) are Cytoplasmic-facing. Positions 215–267 (RVLLRPLQRIMAHIQTIADGDLTHEIEAEGRSEMGQLAAGLKTMQQSLIRTVS) constitute an HAMP domain. Positions 272 to 501 (NADSIYTGAG…ESAAAAAALE (230 aa)) constitute a Methyl-accepting transducer domain. Position 296 is a glutamate methyl ester (Gln) (Q296). The residue at position 303 (E303) is a Glutamate methyl ester (Glu). Q310 is modified (glutamate methyl ester (Gln)). Positions 317–336 (QNTDNARQATGLAKTASETA) are disordered. Residues E492 and E501 each carry the glutamate methyl ester (Glu) modification. The disordered stretch occupies residues 518–547 (KQPRREASPTTLSKGLTPQPAAEQANWESF).

The protein belongs to the methyl-accepting chemotaxis (MCP) protein family. In terms of processing, methylation level is increased by citrate and decreased by phenol.

The protein resides in the cell inner membrane. Functionally, acts as a receptor for citrate and mediates taxis away from phenol. Also mediates an attractant response to metal-citrate complexes. This chain is Methyl-accepting chemotaxis citrate transducer (tcp), found in Salmonella typhimurium (strain LT2 / SGSC1412 / ATCC 700720).